We begin with the raw amino-acid sequence, 504 residues long: DNA-binding protein reb1 (504 aa).

Residues 30-51 (DFDDFPLNKGLKTNNNDYSGSI) are disordered. 2 consecutive HTH myb-type domains span residues 308–361 (NPFE…RFGD) and 362–422 (KLKR…KAAS). 2 DNA-binding regions (H-T-H motif) span residues 335 to 357 (WTKI…RDVV) and 395 to 418 (WTLV…QQLT).

It is found in the nucleus. DNA-binding protein that recognizes sites within both the enhancer and the promoter of rRNA transcription, as well as upstream of many genes transcribed by RNA polymerase II. Has a role in the termination of RNA polymerase I catalyzed transcription. In Schizosaccharomyces pombe (strain 972 / ATCC 24843) (Fission yeast), this protein is DNA-binding protein reb1 (reb1).